Reading from the N-terminus, the 443-residue chain is Deoxyguanosinetriphosphate triphosphohydrolase-like protein (443 aa).

One can recognise an HD domain in the interval 66–259; that stretch reads RLTHSLEAAQ…MELADDIAYG (194 aa).

It belongs to the dGTPase family. Type 2 subfamily.

This chain is Deoxyguanosinetriphosphate triphosphohydrolase-like protein, found in Vibrio vulnificus (strain CMCP6).